Consider the following 261-residue polypeptide: Chloroplastic import inner membrane translocase subunit HP30-1 (261 aa).

The next 4 helical transmembrane spans lie at 59-77 (AAVVSTMSGVQGAFIGGLM), 113-129 (NFAAITGVNAGIASVMK), 139-155 (SAVVAALGSGFAYSLVS), and 163-180 (MNAITTAAGFAVFQGVFF).

It belongs to the Tim17/Tim22/Tim23 family. In terms of assembly, probable component of a protein-conducting channel made of HP30-1, HP30-2 and HP20 that mediates the import of transit sequence-less proteins into the chloroplastic inner membrane. Interacts with CEQORH.

Its subcellular location is the plastid. It is found in the chloroplast inner membrane. In terms of biological role, together with HP30-2 and HP20, triggers the import and insertion of transit sequence-less multi-pass transmembrane proteins (e.g. CEQORH) into the chloroplastic inner membrane. The sequence is that of Chloroplastic import inner membrane translocase subunit HP30-1 from Arabidopsis thaliana (Mouse-ear cress).